The following is a 145-amino-acid chain: uncharacterized protein (145 aa).

Positions 1–49 (MLSIFKNLLGTSEEDGTTQEANSKDTKGLKEERKRKKRKNKYKIPPGHT) are disordered. Over residues 22 to 32 (NSKDTKGLKEE) the composition is skewed to basic and acidic residues. Residues 33 to 42 (RKRKKRKNKY) show a composition bias toward basic residues. Serine 68 carries the phosphoserine modification. The 77-residue stretch at 69–145 (PISVTAEELA…LKTSFVGYLV (77 aa)) folds into the Cytochrome b5 heme-binding domain. Heme is bound by residues histidine 104 and histidine 127.

Belongs to the cytochrome b5 family.

Its subcellular location is the cytoplasm. This is an uncharacterized protein from Schizosaccharomyces pombe (strain 972 / ATCC 24843) (Fission yeast).